A 100-amino-acid polypeptide reads, in one-letter code: Integration host factor subunit alpha (100 aa).

This sequence belongs to the bacterial histone-like protein family. Heterodimer of an alpha and a beta chain.

This protein is one of the two subunits of integration host factor, a specific DNA-binding protein that functions in genetic recombination as well as in transcriptional and translational control. This is Integration host factor subunit alpha from Erythrobacter litoralis (strain HTCC2594).